Here is a 211-residue protein sequence, read N- to C-terminus: Ribosomal RNA small subunit methyltransferase G (211 aa).

S-adenosyl-L-methionine-binding positions include G76, L81, 127–128 (VE), and R142.

This sequence belongs to the methyltransferase superfamily. RNA methyltransferase RsmG family.

The protein resides in the cytoplasm. It catalyses the reaction guanosine(527) in 16S rRNA + S-adenosyl-L-methionine = N(7)-methylguanosine(527) in 16S rRNA + S-adenosyl-L-homocysteine. Its function is as follows. Specifically methylates the N7 position of guanine in position 527 of 16S rRNA. The chain is Ribosomal RNA small subunit methyltransferase G from Vibrio vulnificus (strain CMCP6).